We begin with the raw amino-acid sequence, 316 residues long: Beta-ketoacyl-[acyl-carrier-protein] synthase III 1 (316 aa).

Residues cysteine 112 and histidine 243 contribute to the active site. The interval 244-248 is ACP-binding; the sequence is QANYR. Residue asparagine 273 is part of the active site.

The protein belongs to the thiolase-like superfamily. FabH family. Homodimer.

Its subcellular location is the cytoplasm. It catalyses the reaction malonyl-[ACP] + acetyl-CoA + H(+) = 3-oxobutanoyl-[ACP] + CO2 + CoA. It functions in the pathway lipid metabolism; fatty acid biosynthesis. Functionally, catalyzes the condensation reaction of fatty acid synthesis by the addition to an acyl acceptor of two carbons from malonyl-ACP. Catalyzes the first condensation reaction which initiates fatty acid synthesis and may therefore play a role in governing the total rate of fatty acid production. Possesses both acetoacetyl-ACP synthase and acetyl transacylase activities. Its substrate specificity determines the biosynthesis of branched-chain and/or straight-chain of fatty acids. This is Beta-ketoacyl-[acyl-carrier-protein] synthase III 1 from Vibrio vulnificus (strain YJ016).